We begin with the raw amino-acid sequence, 173 residues long: Crossover junction endodeoxyribonuclease RuvC (173 aa).

Active-site residues include D8, E67, and D139. D8, E67, and D139 together coordinate Mg(2+).

Belongs to the RuvC family. In terms of assembly, homodimer which binds Holliday junction (HJ) DNA. The HJ becomes 2-fold symmetrical on binding to RuvC with unstacked arms; it has a different conformation from HJ DNA in complex with RuvA. In the full resolvosome a probable DNA-RuvA(4)-RuvB(12)-RuvC(2) complex forms which resolves the HJ. Mg(2+) is required as a cofactor.

It localises to the cytoplasm. It catalyses the reaction Endonucleolytic cleavage at a junction such as a reciprocal single-stranded crossover between two homologous DNA duplexes (Holliday junction).. Functionally, the RuvA-RuvB-RuvC complex processes Holliday junction (HJ) DNA during genetic recombination and DNA repair. Endonuclease that resolves HJ intermediates. Cleaves cruciform DNA by making single-stranded nicks across the HJ at symmetrical positions within the homologous arms, yielding a 5'-phosphate and a 3'-hydroxyl group; requires a central core of homology in the junction. The consensus cleavage sequence is 5'-(A/T)TT(C/G)-3'. Cleavage occurs on the 3'-side of the TT dinucleotide at the point of strand exchange. HJ branch migration catalyzed by RuvA-RuvB allows RuvC to scan DNA until it finds its consensus sequence, where it cleaves and resolves the cruciform DNA. This Aliivibrio salmonicida (strain LFI1238) (Vibrio salmonicida (strain LFI1238)) protein is Crossover junction endodeoxyribonuclease RuvC.